A 717-amino-acid chain; its full sequence is Patatin-like phospholipase domain-containing protein PGUG_03164 (717 aa).

A helical transmembrane segment spans residues 123–143 (WPFLIIITVWILLLCILYTVV). The PNPLA domain occupies 298-490 (LCLSGGACFA…RTDIPIDALK (193 aa)). Positions 329–333 (GTSGG) match the GXSXG motif. Residue serine 331 is the Nucleophile of the active site. Aspartate 477 (proton acceptor) is an active-site residue. Positions 680 to 717 (YDSESSAEETLSPGFSQGTHAVLTDESDDDSSDDEIDD) are disordered. Over residues 704–717 (DESDDDSSDDEIDD) the composition is skewed to acidic residues.

The protein belongs to the PLPL family.

Its subcellular location is the membrane. Functionally, probable lipid hydrolase. This chain is Patatin-like phospholipase domain-containing protein PGUG_03164, found in Meyerozyma guilliermondii (strain ATCC 6260 / CBS 566 / DSM 6381 / JCM 1539 / NBRC 10279 / NRRL Y-324) (Yeast).